Consider the following 1076-residue polypeptide: ESX secretion system protein YueB (1076 aa).

Residues 9-29 (IKLISAVIIILLLPVLFFRFI) form a helical membrane-spanning segment. Disordered stretches follow at residues 372-404 (RLSL…DIED) and 423-552 (IKDI…ETDI). The span at 423–439 (IKDISEGLKEPEQEKPT) shows a compositional bias: basic and acidic residues. Composition is skewed to polar residues over residues 449–495 (DDSP…NIET) and 503–522 (SKNV…SKTD). Residues 552-622 (ISGAKKRLNE…TKKLVDFDNN (71 aa)) are a coiled coil. The next 5 helical transmembrane spans lie at 904-924 (TVPP…IGYF), 938-958 (ALFG…GLNI), 964-984 (DQTI…SAFI), 995-1015 (GWVA…DLIM), and 1040-1060 (TMGI…PLII).

It belongs to the EsaA family.

The protein resides in the cell membrane. Required for YukE secretion. Probable component or regulator of the ESX/ESAT-6-like secretion system (BsEss). Bacteriophage SPP1 receptor. Essential for the irreversible adsorption of the bacteriophage. The polypeptide is ESX secretion system protein YueB (yueB) (Bacillus subtilis (strain 168)).